We begin with the raw amino-acid sequence, 234 residues long: Response regulator RppA (234 aa).

The Response regulatory domain maps to 2-118; that stretch reads RILLVEDETD…ELLARLRALQ (117 aa). Asp-53 is modified (4-aspartylphosphate). A DNA-binding region (ompR/PhoB-type) is located at residues 126-232; the sequence is PQILTLGNFS…VPGQGYRFTL (107 aa).

In terms of assembly, interacts with histidine kinase Hik2; may accept phosphate from Hik2.

In terms of biological role, member of two-component regulatory system RppA/RppB, involved in the establishment of the appropriate stoichiometry between the 2 photosystems. It senses changes in the plastoquinone (PQ) redox poise. Another group shows this two-component pair, renamed NrsR/NrsS, controls the nickel-dependent expression of the nrsBACD operon; they suggest the photosystem-related activities seen earlier are due to the expression of NrsS (RppB) in the absence of its natural substrate NrsR (RppA). May accept phosphate from Hik2 in a possible Hik2/RppA two-component system. This Synechocystis sp. (strain ATCC 27184 / PCC 6803 / Kazusa) protein is Response regulator RppA.